A 366-amino-acid chain; its full sequence is Phospho-N-acetylmuramoyl-pentapeptide-transferase (366 aa).

10 helical membrane passes run 3-23 (QIII…PILI), 55-75 (IAII…SYFA), 80-100 (FTAS…TGFA), 118-138 (AKLI…LRFP), 161-181 (IAFG…YVVV), 197-217 (LAAG…FWQF), 238-258 (IAVL…WNAA), 262-282 (IFMG…ISVV), 290-310 (VIIG…IAVF), and 341-361 (FWLI…GDWL).

Belongs to the glycosyltransferase 4 family. MraY subfamily. Mg(2+) serves as cofactor.

The protein localises to the cell membrane. It carries out the reaction UDP-N-acetyl-alpha-D-muramoyl-L-alanyl-gamma-D-glutamyl-meso-2,6-diaminopimeloyl-D-alanyl-D-alanine + di-trans,octa-cis-undecaprenyl phosphate = di-trans,octa-cis-undecaprenyl diphospho-N-acetyl-alpha-D-muramoyl-L-alanyl-D-glutamyl-meso-2,6-diaminopimeloyl-D-alanyl-D-alanine + UMP. Its pathway is cell wall biogenesis; peptidoglycan biosynthesis. Catalyzes the initial step of the lipid cycle reactions in the biosynthesis of the cell wall peptidoglycan: transfers peptidoglycan precursor phospho-MurNAc-pentapeptide from UDP-MurNAc-pentapeptide onto the lipid carrier undecaprenyl phosphate, yielding undecaprenyl-pyrophosphoryl-MurNAc-pentapeptide, known as lipid I. The protein is Phospho-N-acetylmuramoyl-pentapeptide-transferase of Corynebacterium efficiens (strain DSM 44549 / YS-314 / AJ 12310 / JCM 11189 / NBRC 100395).